A 514-amino-acid chain; its full sequence is Efflux pump aflT (514 aa).

A run of 10 helical transmembrane segments spans residues Ile-13 to Ala-33, Ser-61 to Phe-81, Trp-85 to Pro-105, Ile-116 to Val-136, Gly-146 to Phe-166, Trp-174 to Leu-194, Gly-218 to Val-238, Ile-247 to Leu-267, Val-289 to Phe-309, and Gly-321 to Val-341. N-linked (GlcNAc...) asparagine glycosylation is present at Asn-343. The next 4 membrane-spanning stretches (helical) occupy residues Trp-351–Val-371, Trp-378–Val-398, Ile-411–Ala-431, and Leu-485–Ile-505.

This sequence belongs to the major facilitator superfamily. TCR/Tet family.

The protein localises to the cell membrane. In terms of biological role, efflux pump; part of the gene cluster that mediates the biosynthesis of aflatoxins. The sequence is that of Efflux pump aflT from Aspergillus parasiticus (strain ATCC 56775 / NRRL 5862 / SRRC 143 / SU-1).